Reading from the N-terminus, the 192-residue chain is ATP synthase protein MI25 (192 aa).

A helical membrane pass occupies residues 29–49 (ILIYNEEMIVALCFIGFIIFS).

The protein belongs to the ATPase protein MI25 family. As to quaternary structure, F-type ATPases have 2 components, CF(1) - the catalytic core - and CF(0) - the membrane proton channel. CF(1) has five subunits: alpha(3), beta(3), gamma(1), delta(1), epsilon(1). CF(0) has three main subunits: a, b and c.

The protein resides in the mitochondrion membrane. Functionally, this is one of the chains of the nonenzymatic component (CF(0) subunit) of the mitochondrial ATPase complex. In Arabidopsis thaliana (Mouse-ear cress), this protein is ATP synthase protein MI25 (ATP4).